Here is a 388-residue protein sequence, read N- to C-terminus: Angiopoietin-related protein 5 (388 aa).

The N-terminal stretch at 1–25 (MMSPSQASLLFLNVCIFICGEAVQG) is a signal peptide. Asparagine 53 carries an N-linked (GlcNAc...) asparagine glycan. A coiled-coil region spans residues 98-123 (LRNMMDEQQASLDYLSNQVNELMNRV). The 243-residue stretch at 141 to 383 (RPVQSHGLDC…SVSMKIRRMY (243 aa)) folds into the Fibrinogen C-terminal domain. A glycan (N-linked (GlcNAc...) asparagine) is linked at asparagine 238. Intrachain disulfides connect cysteine 310–cysteine 314 and cysteine 324–cysteine 338. Residue asparagine 329 is glycosylated (N-linked (GlcNAc...) asparagine).

Mainly expressed in adult heart.

Its subcellular location is the secreted. In Homo sapiens (Human), this protein is Angiopoietin-related protein 5 (ANGPTL5).